The following is a 301-amino-acid chain: Prohibitin-2 (301 aa).

2 necessary for transcriptional repression regions span residues 19-49 and 150-174; these read VGTA…GQRA and ASQL…RAKD. The stretch at 190–237 forms a coiled coil; the sequence is SREYTAAVEAKQVAQQEAQRAQFLVEKAKQEQKQKIVQAEGEATAAKM.

It belongs to the prohibitin family. In terms of assembly, the mitochondrial prohibitin complex consists of two subunits (PHB1 and PHB2), assembled into a membrane-associated ring-shaped supercomplex of approximately 1 mDa.

The protein resides in the mitochondrion inner membrane. Its subcellular location is the cytoplasm. The protein localises to the nucleus. It localises to the cell membrane. In terms of biological role, protein with pleiotropic attributes mediated in a cell-compartment- and tissue-specific manner, which include the plasma membrane-associated cell signaling functions, mitochondrial chaperone, and transcriptional co-regulator of transcription factors and sex steroid hormones in the nucleus. In the mitochondria, together with PHB, forms large ring complexes (prohibitin complexes) in the inner mitochondrial membrane (IMM) and functions as a chaperone protein that stabilizes mitochondrial respiratory enzymes and maintains mitochondrial integrity in the IMM, which is required for mitochondrial morphogenesis, neuronal survival, and normal lifespan. Functionally, in the nucleus, serves as transcriptional co-regulator. This is Prohibitin-2 (PHB2) from Gallus gallus (Chicken).